Reading from the N-terminus, the 492-residue chain is MENRYISRIETISSHLLSTNDVSSQNESESITFVKPLPKNKKDHDQSIESDSSFTREKQFEEELDILGEINSKTGLFEIKQVPYQLSFDQGFFHACRAIEILTEKDPKRIICLGIAGPVGAGKTTLANKIGSLVNGVIISLQDFVKLENVKDNNYDDPVLIDFDKVISTLNELKENKTVIIPKIVNRKMESRSISLSTSKVIILEGAYALSARIRPLLDISVAITGGVHLDLIKSIMRGIVTSGKNSSKDVLAQITNVVFPMFKAFVEPDLDQAKIKIHSSFNPMSQVVEPVYVCKAKYDNNKQFFDQFLSSLNVVPVKKNFSDMYLYPPKYGVDGISQADKRNWIRIRRSEHGQFNITFYNEMMDGAVNTRPSLNFEISVKTLGGLLSLGYQIGAILNRTVEVWYDKNGVVITKEYIKELEKHFIQIKGHSRREVLDSAEKLKITGNHVPQTFLYLYFKKLKKSKNPNYSKLKPNNTNSKILKNNKDKKNL.

The interval 36–56 is disordered; it reads PLPKNKKDHDQSIESDSSFTR. 117–124 contacts ATP; that stretch reads GPVGAGKT. A CYTH domain is found at 290-460; that stretch reads EPVYVCKAKY…PQTFLYLYFK (171 aa). Positions 468–483 are enriched in low complexity; it reads PNYSKLKPNNTNSKIL. The tract at residues 468 to 492 is disordered; it reads PNYSKLKPNNTNSKILKNNKDKKNL.

Belongs to the uridine kinase family.

It catalyses the reaction uridine + ATP = UMP + ADP + H(+). The enzyme catalyses cytidine + ATP = CMP + ADP + H(+). It functions in the pathway pyrimidine metabolism; CTP biosynthesis via salvage pathway; CTP from cytidine: step 1/3. The protein operates within pyrimidine metabolism; UMP biosynthesis via salvage pathway; UMP from uridine: step 1/1. In terms of biological role, catalyzes the conversion of uridine into uridine monophosphate and cytidine into cytidine monophosphate in the pyrimidine salvage pathway. The sequence is that of Uridine-cytidine kinase D (udkD) from Dictyostelium discoideum (Social amoeba).